Here is a 102-residue protein sequence, read N- to C-terminus: Small ribosomal subunit protein uS10 (102 aa).

It belongs to the universal ribosomal protein uS10 family. In terms of assembly, part of the 30S ribosomal subunit.

Functionally, involved in the binding of tRNA to the ribosomes. This Mesoplasma florum (strain ATCC 33453 / NBRC 100688 / NCTC 11704 / L1) (Acholeplasma florum) protein is Small ribosomal subunit protein uS10.